The primary structure comprises 472 residues: L-fuculokinase (472 aa).

Belongs to the FGGY kinase family. A divalent metal cation serves as cofactor.

It catalyses the reaction L-fuculose + ATP = L-fuculose 1-phosphate + ADP + H(+). It functions in the pathway carbohydrate degradation; L-fucose degradation; L-lactaldehyde and glycerone phosphate from L-fucose: step 2/3. Functionally, catalyzes the phosphorylation of L-fuculose. The sequence is that of L-fuculokinase from Escherichia coli O157:H7.